A 206-amino-acid chain; its full sequence is Phosphoribosyl-dephospho-CoA transferase (206 aa).

Active-site residues include Asp-131 and Asp-133.

Belongs to the MdcG family.

The enzyme catalyses apo-[malonate decarboxylase ACP] + 2'-(5''-triphospho-alpha-D-ribosyl)-3'-dephospho-CoA = holo-[malonate decarboxylase ACP] + diphosphate. Its function is as follows. Transfers 2'-(5-triphosphoribosyl)-3'-dephosphocoenzyme-A to the apo-[acyl-carrier-protein] of the malonate decarboxylase to yield holo-[acyl-carrier-protein]. This is Phosphoribosyl-dephospho-CoA transferase from Pseudomonas fluorescens (strain Pf0-1).